The following is a 99-amino-acid chain: Plastocyanin B'/B'' (99 aa).

The Plastocyanin-like domain occupies 1-99 (IEVLLGSDDG…AGMVGKVTVN (99 aa)). Residues His-37, Cys-84, His-87, and Met-92 each contribute to the Cu cation site.

This sequence belongs to the plastocyanin family. It depends on Cu(2+) as a cofactor.

Its subcellular location is the plastid. The protein localises to the chloroplast thylakoid membrane. Its function is as follows. Participates in electron transfer between P700 and the cytochrome b6-f complex in photosystem I. The protein is Plastocyanin B'/B'' of Nicotiana tabacum (Common tobacco).